The primary structure comprises 221 residues: UPF0502 protein XOO0224 (221 aa).

This sequence belongs to the UPF0502 family.

The polypeptide is UPF0502 protein XOO0224 (Xanthomonas oryzae pv. oryzae (strain MAFF 311018)).